A 145-amino-acid polypeptide reads, in one-letter code: MHPAHLLVLLGVYVSLLGAARIPPLPLNLIQFSNMIKCTIPGSQPLLDYANYGCYCGPGNNGTPVDDVDRCCQAHDECYDEASNHGCYPELTLYDYYCDTGVPYCKARTQCQVFVCGCDLAVAKCLAGATYNDENKNINTGERCQ.

A signal peptide spans 1-19 (MHPAHLLVLLGVYVSLLGA). A propeptide spanning residues 20 to 27 (ARIPPLPL) is cleaved from the precursor. 7 disulfide bridges follow: Cys38–Cys98, Cys54–Cys144, Cys56–Cys72, Cys71–Cys125, Cys78–Cys118, Cys87–Cys111, and Cys105–Cys116.

The protein belongs to the phospholipase A2 family. Group I subfamily. D49 sub-subfamily. Heterohexamer. 2 forms exist: 2 A or 2 B chains, 2 C chains and 2 covalently-linked D chains, and 1 A or 1 B, 1 C, 2 covalently-linked D chains and 2 differentially glycosylated covalently-linked D chains. Textilotoxin was originally described as pentameric. As to expression, expressed by the venom gland.

The protein resides in the secreted. In terms of biological role, snake venom oligomeric phospholipase A2 that has potent presynaptic neurotoxicity. Chain C is not itself neurotoxic, but it is essential for the neurotoxicity of textilotoxin. Chain C possesses a very low phospholipase activity. The chain is Acidic phospholipase A2 homolog textilotoxin C chain from Pseudonaja textilis (Eastern brown snake).